The primary structure comprises 131 residues: MDKKTIYFICTGNSCRSQMAEGWGKKILGDEWQVYSGGIEAHGVNPKAIEAMKEVGIDISNHTSNLIDKNILNQSDLVVTLCSDADNNCPILPPNVKKEHWGFDDPAGKPWSEFQRVRDEIKTAIESFKTR.

Active-site nucleophile residues include Cys-10, Cys-82, and Cys-89. Cystine bridges form between Cys-10-Cys-82 and Cys-82-Cys-89.

The protein belongs to the low molecular weight phosphotyrosine protein phosphatase family. Thioredoxin-coupled ArsC subfamily.

The protein localises to the cytoplasm. It catalyses the reaction arsenate + [thioredoxin]-dithiol + H(+) = arsenite + [thioredoxin]-disulfide + H2O. Catalyzes the reduction of arsenate [As(V)] to arsenite [As(III)]. This is Arsenate reductase 2 from Staphylococcus haemolyticus (strain JCSC1435).